The following is a 601-amino-acid chain: Arginine--tRNA ligase (601 aa).

The 'HIGH' region motif lies at 133-143; it reads PNTNKPLHLGH.

The protein belongs to the class-I aminoacyl-tRNA synthetase family. In terms of assembly, monomer.

Its subcellular location is the cytoplasm. It catalyses the reaction tRNA(Arg) + L-arginine + ATP = L-arginyl-tRNA(Arg) + AMP + diphosphate. The sequence is that of Arginine--tRNA ligase from Flavobacterium psychrophilum (strain ATCC 49511 / DSM 21280 / CIP 103535 / JIP02/86).